The chain runs to 489 residues: Cytochrome P450 monooxygenase bfoB (489 aa).

Positions 1–18 (MLALYLIAGLLVGLLVYR) are cleaved as a signal peptide. Residues Asn-113, Asn-348, and Asn-386 are each glycosylated (N-linked (GlcNAc...) asparagine). Cys-429 contributes to the heme binding site.

The protein belongs to the cytochrome P450 family. Requires heme as cofactor.

The enzyme catalyses 2 fonsecin B + NADPH + O2 + H(+) = bifonsecin B + NADP(+) + 2 H2O. The catalysed reaction is 2 rubrofusarin B + NADPH + O2 + 3 H(+) = nigerone + NADP(+) + 2 H2O. It participates in secondary metabolite biosynthesis. Cytochrome P450 monooxygenase; part of the gene cluster that mediates the biosynthesis of bifonsecin B, a dimeric gamma-naphthopyrone. The first step in the biosynthesis of bifonsecin B is the production of gamma-naphthopyrone precursor YWA1 by the non-reducing polyketide synthase albA, via condensation of one acetyl-CoA starter unit with 6 malonyl-CoA units. YWA1 is then methylated by bfoE at position C-6 to yield foncesin which is further methylated at position C-8 by bfoD to produce fonsecin B. A key enzyme in the biosynthetic pathway is the cytochrome P450 monooxygenase bfoB which catalyzes the oxidative dimerization of fonsecin B to bifonsecin B. Bfob also catalyzes the oxidative dimerization of rubrofusarin B into nigerone. The stereoselectivity of bfoB is influenced by the two natural monomeric substrates; homodimerization of fonsecin B yields a stereochemically pure biaryl, M-foncerine B, while rubrofusarin B yields a mixture of enantiomers M- and P-nigerone. In Aspergillus brasiliensis (strain CBS 101740 / IMI 381727 / IBT 21946), this protein is Cytochrome P450 monooxygenase bfoB.